A 275-amino-acid polypeptide reads, in one-letter code: Stage 0 sporulation protein YaaT (275 aa).

The PSP1 C-terminal domain occupies Arg-61–Ile-146.

The protein localises to the cytoplasm. In terms of biological role, essential for the phosphorelay during initiation of sporulation. May control the level of phosphorylated spo0A through spo0E activity during sporulation. The chain is Stage 0 sporulation protein YaaT (yaaT) from Bacillus subtilis (strain 168).